A 179-amino-acid polypeptide reads, in one-letter code: Coiled-coil domain-containing protein 32 (179 aa).

Positions 36-65 (DNAFSDSFMDSHPAGESHTAAADSAVQPAG) are disordered. Residues 75–98 (EVYLASLEKKLRRIKGLNEEVTSK) adopt a coiled-coil conformation. Positions 158–179 (LIPPESQAEKPEAGDKPAAAEQ) are disordered.

In terms of assembly, interacts with AP2S1; the interaction is direct and mediates association with adaptor protein complex 2 (AP-2).

The protein localises to the membrane. The protein resides in the coated pit. Functionally, regulates clathrin-mediated endocytsois of cargos such as transferrin probably through the association and modulation of adaptor protein complex 2 (AP-2). Has a role in ciliogenesis. Required for proper cephalic and left/right axis development. The polypeptide is Coiled-coil domain-containing protein 32 (Ccdc32) (Mus musculus (Mouse)).